We begin with the raw amino-acid sequence, 369 residues long: mRNA cap guanine-N(7) methyltransferase 1 (369 aa).

Positions 1-55 are disordered; it reads MNKRPRDEPSSSFASAPKRQYGAGGGGYGGHGYSEERSSARRVADHYSARSNQTL. Residues 22-32 are compositionally biased toward gly residues; it reads GAGGGGYGGHG. Positions 33–48 are enriched in basic and acidic residues; the sequence is YSEERSSARRVADHYS. Residues 61–340 form the mRNA cap 0 methyltransferase domain; it reads SPIIHLKKLN…LYLAFVLRKR (280 aa). 70-71 is a binding site for mRNA; that stretch reads NN. S-adenosyl-L-methionine is bound by residues K74, A92, D114, 149–150, and 171–173; these read DC and QFA.

The protein belongs to the class I-like SAM-binding methyltransferase superfamily. mRNA cap 0 methyltransferase family.

It is found in the nucleus. The catalysed reaction is a 5'-end (5'-triphosphoguanosine)-ribonucleoside in mRNA + S-adenosyl-L-methionine = a 5'-end (N(7)-methyl 5'-triphosphoguanosine)-ribonucleoside in mRNA + S-adenosyl-L-homocysteine. Functionally, mRNA-capping methyltransferase that methylates the N7 position of the added guanosine to the 5'-cap structure of mRNAs. Binds RNA containing 5'-terminal GpppC. The sequence is that of mRNA cap guanine-N(7) methyltransferase 1 from Oryza sativa subsp. japonica (Rice).